The primary structure comprises 85 residues: Beta-insect depressant toxin Lqh-dprIT3b (85 aa).

The signal sequence occupies residues 1–21 (MKLLLLLTISASMLIEGLVNA). The region spanning 22–82 (DGYIRGGDGC…EWDYETNTCG (61 aa)) is the LCN-type CS-alpha/beta domain. Intrachain disulfides connect Cys-31/Cys-81, Cys-35/Cys-56, Cys-42/Cys-63, and Cys-46/Cys-65. Position 82 is a glycine amide (Gly-82).

This sequence belongs to the long (4 C-C) scorpion toxin superfamily. Sodium channel inhibitor family. Beta subfamily. As to expression, expressed by the venom gland.

It is found in the secreted. Depressant insect beta-toxins cause a transient contraction paralysis followed by a slow flaccid paralysis. They bind voltage-independently at site-4 of sodium channels (Nav) and block action potentials, primarily by depolarizing the axonal membrane and suppressing the sodium current. This depressant toxin is active only on insects. It is found in a relatively small amount in the venom, and its activity on insects is 10-fold higher compared to other known depressant toxins. This is Beta-insect depressant toxin Lqh-dprIT3b from Leiurus hebraeus (Hebrew deathstalker scorpion).